The chain runs to 486 residues: G2/mitotic-specific cyclin-4 (486 aa).

Disordered stretches follow at residues 1 to 80 (MRSY…SSNK) and 105 to 126 (VLLN…DKEN). Polar residues predominate over residues 25–41 (ANLSSNHTTAGQPSTSS). Positions 108 to 123 (NDDDDETDDEFDDEED) are enriched in acidic residues. Residues 122-184 (EDKENRYHDL…QSHTQDMRSI (63 aa)) adopt a coiled-coil conformation. In terms of domain architecture, Cyclin N-terminal spans 234–359 (EIFNYLHELE…FMIDVLEFDL (126 aa)).

The protein belongs to the cyclin family. Cyclin AB subfamily. As to quaternary structure, interacts with IQG1.

Functionally, 2/mitotic-specific cyclin essential for the control of the cell cycle at the G2/M (mitosis) transition. G2/M cyclins accumulate steadily during G2 and are abruptly destroyed at mitosis. Degradation is necessary for the cell to exit from mitosis. Plays a role in morphogenesis by negatively regulating polarized growth. Through binding to CDC28 regulates cytokinesis, partly by phosphorylation of the actomyosin ring component IQG1. The protein is G2/mitotic-specific cyclin-4 (CLB4) of Candida albicans (strain SC5314 / ATCC MYA-2876) (Yeast).